Here is a 702-residue protein sequence, read N- to C-terminus: MPRTRVNLQKSEANDRSFTISSLEFCLSQLRKADPNLVKKAIASGDGLTESKNDVSTRLSEAHRYSVQQCLDNSEQLAQLHNQLVHCDNVFERLQATLYSFQDNLGSIGQDMKNLQLQSHHIHQELENRQKVRVELSQFVDDIAVSQTMMKTINDTDANDRGFLEALHELHHKITLILQRGNGDAVAVNDTMPILEGLKLKAVVKVREWLLQKMFQFRKPLSNYQVFQHQLLKCRFFYEFLLHHDLISAKELQDEYIDTISKMFFTYFKAYATRLFKLAMKDVATKEDALGSIDFAKPAGLGAIFSSKQHVVRNKATVFSIGQRHQILSDDFLGALIVPHAATQNHQSYQFEALFRSIQLAFVDHYSHEYLFITDFFLVSNDEAIELHNKAMARAMSVVLKSCEEQIALSWDAISLHLCICLCDKFTEVLAEREVPEVSDYWNTVTSFLWTRLNLVMSQHYESVKSVDLKKLMHSGSLDARPHFIVRRYAELTSAHLMIAKASGKEMGAKMEAVLENSEDSIEQLLTRMSAMQQTQKNKHVFLINNYDLILSIIDNEESKHTKIYAIVHELEQKSIDDFVEEMLEPHIGYMIKFVNECESLIVQGHTQLLVRYNDKVGTVVANFNAKWRPAVDSINSECIQLFTNFSLGTTILQTIFTKYVQYINRFTKILSHDVFAKNPVCSQLVNVHQVMLEIKRFKPAY.

The stretch at 505-535 (KEMGAKMEAVLENSEDSIEQLLTRMSAMQQT) forms a coiled coil.

This sequence belongs to the VPS52 family. As to quaternary structure, component of the Golgi-associated retrograde protein (GARP) complex, also called VFT (VPS fifty-three) complex, composed of vps-51, vps-52, vps-53 and vps-54. Within the complex interacts with vps-53 and vps-54. Interacts with the small GTPases rab-6.1 and rab-6.2. Ubiquitously expressed, with particularly strong expression in neuronal cells. Specifically expressed in head and tail neurons and in the pharynx and ventral cord motor neurons.

The protein resides in the golgi apparatus. It is found in the trans-Golgi network. Its subcellular location is the perikaryon. The protein localises to the cytoplasm. It localises to the perinuclear region. In terms of biological role, acts as a component of the GARP complex that is involved in retrograde transport from early and late endosomes to the trans-Golgi network (TGN). The GARP complex facilitates tethering as well as SNARE complex assembly at the Golgi. Plays a role in the trafficking of cargo to dense-core vesicles, probably through association with the EARP-interacting protein eipr-1. Important for neuronal function. The polypeptide is Vacuolar protein sorting-associated protein 52 homolog (Caenorhabditis elegans).